The following is a 729-amino-acid chain: Neurochondrin (729 aa).

Ser-2 carries the post-translational modification N-acetylserine. Ser-2 is modified (phosphoserine). Residues Cys-3 and Cys-4 are each lipidated (S-palmitoyl cysteine). Residue Arg-75 is modified to Asymmetric dimethylarginine. Ser-448 carries the post-translational modification Phosphoserine.

It belongs to the neurochondrin family. In terms of assembly, interacts with MCHR1. Interacts with SEMA4C. Interacts with DIAPH1 (via FH3 domain). Interacts with GRM5. Post-translationally, palmitoylated. Palmitoylation by ZDHHC1, ZDHHC3 and ZDHHC11 regulates the association of NCDN with endosome membranes. May also be palmitoylated by ZDHHC7. In terms of tissue distribution, expressed in the neuronal, chondral and bone tissues. Expressed in dendrites. Enriched in the brain in the surface layer I-IV. In brains, protein level increases in male but decreases in female with advancing age (at protein level). In adult brains, it is highly expressed in the forebrain and hindbrain. Highly expressed in the hippocampus, piriform cortex, septum, amygdaloid complex, medial geniculate nucleus, inferior colliculus, cerebellar nuclei and the nuclei of the Vth, VIIth, and XIIth cranial nerves. In bone tissues, it is expressed in osteoblasts and osteocytes.

It is found in the cytoplasm. The protein resides in the cytosol. It localises to the endosome membrane. The protein localises to the cell projection. Its subcellular location is the dendrite. It is found in the postsynapse. Functionally, probably involved in signal transduction, in the nervous system, via increasing cell surface localization of GRM5 and positively regulating its signaling. Required for the spatial learning process. Acts as a negative regulator of Ca(2+)-calmodulin-dependent protein kinase 2 (CaMK2) phosphorylation. May play a role in modulating melanin-concentrating hormone-mediated functions via its interaction with MCHR1 that interferes with G protein-coupled signal transduction. May be involved in bone metabolism. May also be involved in neurite outgrowth. The polypeptide is Neurochondrin (Ncdn) (Mus musculus (Mouse)).